Here is a 177-residue protein sequence, read N- to C-terminus: MIIAVTGTPGVGKTTVSKLLAEKLGYEYVSLRDYAIEKGIGEMKGDELEVEVDELTYNFERDFKGKNVVVDGHLSHFLNADLVVVLRAHPRLIGERLTERGYSREKVGENVEAELVDVILVEALEENENVIEVDTTGKTPEEVVNEILELIEKGVKKRVGVVDWSEVYDEVIPYLRL.

ATP is bound by residues G10, G12, K13, T14, and T15. The interval 30–50 (SLRDYAIEKGIGEMKGDELEV) is NMP. Positions 99–109 (ERGYSREKVGE) are LID. The ATP site is built by R100 and K138.

This sequence belongs to the adenylate kinase family. AK6 subfamily. As to quaternary structure, interacts with uS11. Not a structural component of 40S pre-ribosomes, but transiently interacts with them by binding to uS11.

The enzyme catalyses AMP + ATP = 2 ADP. It catalyses the reaction ATP + H2O = ADP + phosphate + H(+). Its function is as follows. Broad-specificity nucleoside monophosphate (NMP) kinase that catalyzes the reversible transfer of the terminal phosphate group between nucleoside triphosphates and monophosphates. Also has ATPase activity. Involved in the late maturation steps of the 30S ribosomal particles, specifically 16S rRNA maturation. While NMP activity is not required for ribosome maturation, ATPase activity is. Associates transiently with small ribosomal subunit protein uS11. ATP hydrolysis breaks the interaction with uS11. May temporarily remove uS11 from the ribosome to enable a conformational change of the ribosomal RNA that is needed for the final maturation step of the small ribosomal subunit. The polypeptide is Putative adenylate kinase (Thermococcus gammatolerans (strain DSM 15229 / JCM 11827 / EJ3)).